The sequence spans 465 residues: FAD-dependent monooxygenase olcE (465 aa).

A helical transmembrane segment spans residues 9-29 (IIIGGSVAGLTLALSLNKIGI). FAD-binding residues include Glu35, Gly49, Arg108, Asp308, and Ala321.

This sequence belongs to the paxM FAD-dependent monooxygenase family. FAD is required as a cofactor.

It localises to the membrane. It functions in the pathway secondary metabolite biosynthesis; terpenoid biosynthesis. Its function is as follows. FAD-dependent monooxygenase; part of the gene cluster that mediates the biosynthesis of 15-deoxyoxalicine B. The first step of the pathway is the synthesis of nicotinyl-CoA from nicotinic acid by the nicotinic acid-CoA ligase olcI. Nicotinyl-CoA is then a substrate of polyketide synthase olcA to produce 4-hydroxy-6-(3-pyridinyl)-2H-pyran-2-one (HPPO) which is further prenylated by the polyprenyl transferase olcH to yield geranylgeranyl-HPPO. Geranylgeranyl pyrophosphate is provided by the cluster-specific geranylgeranyl pyrophosphate synthase olcC. The FAD-dependent monooxygenase olcE catalyzes the epoxidation of geranylgeranyl-HPPO and the terpene cyclase olcD catalyzes the cyclization of the terpenoid component, resulting in the formation of the tricyclic terpene moiety seen in predecaturin E. The cytochrome P450 monooxygenase then catalyzes the allylic oxidation of predecaturin E, which is followed by spirocylization with concomitant loss of one molecule of water to form decaturin E. Decaturin E is the substrate of the cytochrome P450 monooxygenase olcJ which hydroxylates it at the C-29 position to form decaturin F. The short-chain dehydrogenase/reductase olcF may catalyze the oxidation of decaturin F to generate the 29-hydroxyl-27-one intermediate, and subsequent hemiacetal formation probably leads to the formation of decaturin C. The dioxygenase olcK may be a peroxisomal enzyme that catalyzes the hydroxylation of decaturin C into decaturin A once decaturin C is shuttled into the peroxisome by the MFS transporter olcL. Finally the cytochrome P450 monooxygenase olcB catalyzes the oxidative rearrangement to yield 15-deoxyoxalicine B. In the absence of olcJ, decaturin E may be shunted to a pathway in which it is oxidized to a ketone, possibly by olcF, to form decaturin D, which undergoes further allylic oxidation to yield decaturin G. Moreover, in the absence of oclK or oclL, oclB can convert decaturin C into 15-deoxyoxalicine A. In Penicillium canescens, this protein is FAD-dependent monooxygenase olcE.